A 462-amino-acid polypeptide reads, in one-letter code: Transcription factor-like protein EUC1 (462 aa).

Disordered regions lie at residues 11–43 and 66–97; these read GFGG…TTSP and RPTD…GRIK. Phosphoserine occurs at positions 17 and 23. Residues 26-35 are compositionally biased toward basic and acidic residues; sequence DSERRNHDLG. The tract at residues 81–140 is homodimerization region; sequence SASATEPTNRIGPGRIKETPETNFNAFLIAQLTRMEEQNANLKEEISLMKKEQELFFLEN. Positions 105-135 form a coiled coil; that stretch reads NAFLIAQLTRMEEQNANLKEEISLMKKEQEL. 2 disordered regions span residues 190-214 and 226-289; these read QEAA…STNW and GDPR…RNRR. Polar residues predominate over residues 197-214; that stretch reads NPSTSTQAHQSQSRSTNW. Lys231 is covalently cross-linked (Glycyl lysine isopeptide (Lys-Gly) (interchain with G-Cter in SUMO)). Phosphoserine is present on residues Ser237 and Ser249. Residues 240 to 251 are compositionally biased toward acidic residues; sequence ENGEYDGNESDE. The segment covering 252–282 has biased composition (polar residues); that stretch reads NATTRNLPLNNPDSVSNADDSNNQLDGTGNE. Phosphothreonine is present on Thr254. Residues 296-385 are GCR1 DNA-binding region; it reads YKLNRAIQNV…QAIKVVENIR (90 aa). A compositionally biased stretch (polar residues) spans 441-455; the sequence is SLQQPHSIPNSSTGT. The tract at residues 441–462 is disordered; sequence SLQQPHSIPNSSTGTPEHDQDT.

Homodimer. Interacts with SLX5. Post-translationally, sumoylated at Lys-231 and subsequently ubiquitinated by the SUMO-targeted ubiquitin ligase (STUbL) complex SLX5/SLX8.

It is found in the chromosome. Its function is as follows. Transcription factor-like protein that binds to specific DNA motifs called ub-HS-motif associated with several locations where proteins other than histone H2B are ubiquitinated (ub-hotspots). Ubiquitination at these sites depends on the SUMO-targeted ubiquitin ligase (STUbL) complex SLX5/SLX8 and protein turnover on the CDC48 segregase. UBC9, SIZ1, or SIZ2 sumoylate DNA-bound EUC1 to stabilize its DNA-binding. Sumoylated EUC1 acts a cofactor required for the recruitment of the SLX5/SLX8 STUbL complex via specific contacts between EUC1 and SLX5, as well as an additional SUMO-mediated interaction. SLX5/SLX8 then ubiquitinates EUC1 and presumably other targets at ub-hotspots, and the CDC48/UFD1/NPL4 complex, together with UBX4 and UBX5, removes Lys-48-linked ubiquitinated proteins from chromatin. Ubiquitinated proteins could be either degraded by the proteasome or recycled by deubiquitination. EUC1 itself does not seem to underlie extensive turnover, as it is a very stable protein. EUC1 is able to act as a transcription factor, but its function at ub-hotspots does not seem to depend on this ability. EUC1-mediated ub-hotspots are crucial during stress responses when gene expression control is impaired. This chain is Transcription factor-like protein EUC1, found in Saccharomyces cerevisiae (strain ATCC 204508 / S288c) (Baker's yeast).